We begin with the raw amino-acid sequence, 466 residues long: Soluble pyridine nucleotide transhydrogenase (466 aa).

Position 36-45 (36-45 (ERYHNVGGGC)) interacts with FAD.

This sequence belongs to the class-I pyridine nucleotide-disulfide oxidoreductase family. FAD serves as cofactor.

The protein localises to the cytoplasm. The catalysed reaction is NAD(+) + NADPH = NADH + NADP(+). In terms of biological role, conversion of NADPH, generated by peripheral catabolic pathways, to NADH, which can enter the respiratory chain for energy generation. The sequence is that of Soluble pyridine nucleotide transhydrogenase from Salmonella paratyphi C (strain RKS4594).